A 522-amino-acid chain; its full sequence is Circadian clock oscillator protein KaiC (522 aa).

KaiC domains are found at residues Met1 to Phe248 and Ala262 to Leu522. ATP contacts are provided by Gly50, Thr51, Gly52, Lys53, Thr54, Ser90, Lys225, Leu226, Arg227, Thr229, His231, Thr241, Asp242, Thr291, Gly292, Thr293, Gly294, Lys295, Thr296, and Leu297. Thr54 provides a ligand contact to Mg(2+). Thr296 lines the Mg(2+) pocket. Position 319 (Glu319) interacts with Mg(2+). Trp332 serves as a coordination point for ATP. Position 432 is a phosphoserine; by autocatalysis (Ser432). The residue at position 433 (Thr433) is a Phosphothreonine; by autocatalysis. ATP contacts are provided by Arg452, Lys458, Met459, Arg460, Ser462, His464, and Lys466.

The protein belongs to the KaiC family. As to quaternary structure, homohexamer; hexamerization is dependent on ATP-binding. The KaiABC complex composition changes during the circadian cycle to control KaiC phosphorylation. Complexes KaiC(6), KaiA(2-4):KaiC(6), KaiB(6):KaiC(6) and KaiC(6):KaiB(6):KaiA(12) are among the most important forms, many form cooperatively. KaiC interacts with SasA, activating its autokinase function and leading to RpaA activation. Mg(2+) is required as a cofactor. Post-translationally, phosphorylated on serine and threonine residues by autocatalysis. Has a 4 step phosphorylation cycle; the autokinase acts first on Thr-433, then Ser-432. When Ser-432 is modified KaiC switches to an autophosphatase mode, acting first on phospho-Thr-433 then phospho-Ser-432.

The enzyme catalyses L-seryl-[protein] + ATP = O-phospho-L-seryl-[protein] + ADP + H(+). The catalysed reaction is L-threonyl-[protein] + ATP = O-phospho-L-threonyl-[protein] + ADP + H(+). It carries out the reaction ATP + H2O = ADP + phosphate + H(+). The interaction with KaiA enhances its phosphorylation status, while the interaction with KaiB decreases it. Functionally, central component of the KaiABC oscillator complex, which constitutes the main circadian regulator in cyanobacteria. Complex composition changes during the circadian cycle to control KaiC phosphorylation. KaiA stimulates KaiC autophosphorylation, while KaiB sequesters KaiA, leading to KaiC autodephosphorylation. Clock output pathways impact the RpaA transcriptional regulator. KaiC enhances the autophosphorylation activity of SasA, which then transfers its phosphate group to RpaA to activate it. KaiB and KaiC together enhance the phospho-RpaA dephosphatase activity of CikA. In terms of biological role, has a weak, temperature-independent ATPase activity; ATPase activity defines the circadian period. The phosphorylation state of KaiC modulates its ATPase activity and effects KaiB binding. This Acaryochloris marina (strain MBIC 11017) protein is Circadian clock oscillator protein KaiC.